Reading from the N-terminus, the 263-residue chain is Receptor-transporting protein 1 (263 aa).

The Cytoplasmic segment spans residues 1–238 (MRIFRPWRLR…QTGSGWNFCS (238 aa)). The 3CxxC-type zinc finger occupies 88–197 (ASGRFHCSWC…GEFCEACQEG (110 aa)). A helical transmembrane segment spans residues 239-259 (IPWCLFWATVLLLIIYLQFSF). Topologically, residues 260 to 263 (RSSV) are extracellular.

The protein belongs to the TMEM7 family. Interacts with olfactory receptors. As to expression, expressed in testis.

The protein localises to the cell membrane. Specifically promotes functional cell surface expression of olfactory receptors, but not of other GPCRs. The polypeptide is Receptor-transporting protein 1 (RTP1) (Homo sapiens (Human)).